Consider the following 317-residue polypeptide: tRNA dimethylallyltransferase (317 aa).

14–21 (GPTASGKS) lines the ATP pocket. 16–21 (TASGKS) provides a ligand contact to substrate. 2 interaction with substrate tRNA regions span residues 39–42 (DSVL) and 163–167 (QRIQR).

This sequence belongs to the IPP transferase family. As to quaternary structure, monomer. Mg(2+) serves as cofactor.

It carries out the reaction adenosine(37) in tRNA + dimethylallyl diphosphate = N(6)-dimethylallyladenosine(37) in tRNA + diphosphate. Its function is as follows. Catalyzes the transfer of a dimethylallyl group onto the adenine at position 37 in tRNAs that read codons beginning with uridine, leading to the formation of N6-(dimethylallyl)adenosine (i(6)A). This is tRNA dimethylallyltransferase from Xylella fastidiosa (strain M23).